Consider the following 577-residue polypeptide: Arginine--tRNA ligase (577 aa).

Positions 122-132 match the 'HIGH' region motif; the sequence is PNVAKEMHVGH.

Belongs to the class-I aminoacyl-tRNA synthetase family. As to quaternary structure, monomer.

The protein resides in the cytoplasm. It carries out the reaction tRNA(Arg) + L-arginine + ATP = L-arginyl-tRNA(Arg) + AMP + diphosphate. In Vibrio campbellii (strain ATCC BAA-1116), this protein is Arginine--tRNA ligase.